The sequence spans 1071 residues: DNA-directed RNA polymerase subunit beta (1071 aa).

Belongs to the RNA polymerase beta chain family. As to quaternary structure, in plastids the minimal PEP RNA polymerase catalytic core is composed of four subunits: alpha, beta, beta', and beta''. When a (nuclear-encoded) sigma factor is associated with the core the holoenzyme is formed, which can initiate transcription.

It localises to the plastid. The protein resides in the chloroplast. It carries out the reaction RNA(n) + a ribonucleoside 5'-triphosphate = RNA(n+1) + diphosphate. DNA-dependent RNA polymerase catalyzes the transcription of DNA into RNA using the four ribonucleoside triphosphates as substrates. The protein is DNA-directed RNA polymerase subunit beta of Nymphaea alba (White water-lily).